A 632-amino-acid polypeptide reads, in one-letter code: MAHETMSFQAEVKQLLHLMIHSLYSNKEIFLRELVSNASDAADKLRFEGLADNALYEDDPNVRIRIGYDKAARTITIDDNGIGMSRDEAIANLGTIARSGTKEFFTKLSGDQQKDAALIGQFGVGFYSGFIVADKITVETRRAGLPASEAVRWESAGEGDFTIDAIERAQRGTTITLHLREGEDELLSSHRLQSIIQKYSDHIALPILMQKEEWDQEKGEMVLKDEDETVNQASALWTRSKSEVSDEQYTQFYQHIAHDHQDPLTWTHNRVEGRSEYTQLLFVPSHAPFDMWNRDYRGGLKLYVKRVFIMDDAEQLLPQYLRFVKGVVDSADLPLNVSREILQESRDVKAIREGVTKRALSMLEELANAEEDAGKEKYKTFWGAFGQVLKEGLGEDHANRERIAKLLRFASTHGDTDAQDVSLADYVSRMKPEQSRIYYVTADAWQAAKNSPHLEVFRKKGVEVLLLTDRVDEWMLSFLQEFDGKPLASVARGDLDLGELNDEEKKAQEEAGEAIKPVVEKMKEALGDKVKEVRVTFRLTDSPSCLVADDNDMSGYLQRMLKAAGQNAPAMQPILEINPEHALVKQLKADSADFGDWCHLLFDQALLAEGGMLDDPASFVKRTNALLLSRAA.

Residues 1-339 (MAHETMSFQA…SADLPLNVSR (339 aa)) are a; substrate-binding. Positions 340–559 (EILQESRDVK…DNDMSGYLQR (220 aa)) are b. A c region spans residues 560–632 (MLKAAGQNAP…TNALLLSRAA (73 aa)).

The protein belongs to the heat shock protein 90 family. As to quaternary structure, homodimer.

It localises to the cytoplasm. Functionally, molecular chaperone. Has ATPase activity. The polypeptide is Chaperone protein HtpG (Burkholderia lata (strain ATCC 17760 / DSM 23089 / LMG 22485 / NCIMB 9086 / R18194 / 383)).